The following is an 826-amino-acid chain: Arf-GAP with ANK repeat and PH domain-containing protein cnt-1 (826 aa).

In terms of domain architecture, PH spans Asp275–Leu373. Positions Thr447 to Ala572 constitute an Arf-GAP domain. Residues Cys462–Cys485 form a C4-type zinc finger. Positions Thr570 to Tyr604 are disordered. Residues Ser588–Ser603 show a composition bias toward low complexity. 3 ANK repeats span residues Asn690–Met719, Lys723–Leu752, and Asp756–Phe789.

Interacts (via C-terminal ankyrin repeat) with rab-10 (GTP-bound form); the interaction is required for cnt-1 recruitment to endosomes. Interacts (via C-terminal ankyrin repeat) with rab-8 (GTP-bound form) and rab-35 (GTP-bound form). In terms of processing, cleaved by caspase ced-3 after Asp-382 and Asp-609. Cleavage at Asp-382 is required for subsequent cleavage at Asp-609.

Its subcellular location is the cytoplasm. It localises to the recycling endosome membrane. The protein resides in the basolateral cell membrane. The protein localises to the apical cell membrane. It is found in the cell membrane. GTPase-activating protein for the ADP ribosylation factor family. Regulates endosome recycling downstream of rab-10 and upstream of arf-6. Functionally, promotes apoptosis during embryonic development. Produced by caspase ced-3-mediated cleavage, and translocates to the plasma membrane where it prevents the activation of the prosurvival Akt-1/2 and sgk-1 signaling pathway by competing with Akt-1/2 for the binding to PtdIns(3,4,5)P3. This chain is Arf-GAP with ANK repeat and PH domain-containing protein cnt-1, found in Caenorhabditis elegans.